A 288-amino-acid polypeptide reads, in one-letter code: MKVDINAIKELRDLTGAGVGDCKDALTSCNGDIEKAKTYLREQGIAKAYKKSNKDVSDGLVAICIDGNKGAILEVNSETDFVARNEKFQKLVLNLAFLANQYEIENIEDFLKCEYSNNTNINDEIMSNIAVIGENIHLNKIGCLSVSSGVVCGYIHNPIVDNLGKVGAIVALESKCDVEKLKIFARQIAMHIVATKPEALSLGVLDQNIIDKERDIIKKQVEQLNKPASVLEKIIDGRMAKFYQEVVLMNQMFIMDSQFTVSELIKKKEEELGSSINIVDYKLFIINK.

The involved in Mg(2+) ion dislocation from EF-Tu stretch occupies residues 79–82 (TDFV).

Belongs to the EF-Ts family.

It is found in the cytoplasm. In terms of biological role, associates with the EF-Tu.GDP complex and induces the exchange of GDP to GTP. It remains bound to the aminoacyl-tRNA.EF-Tu.GTP complex up to the GTP hydrolysis stage on the ribosome. The protein is Elongation factor Ts of Ehrlichia ruminantium (strain Gardel).